The primary structure comprises 203 residues: RNA pyrophosphohydrolase (203 aa).

A Nudix hydrolase domain is found at 6-149; that stretch reads GFRPNVGIIL…KRNVYQMALT (144 aa). The short motif at 38–59 is the Nudix box element; it reads GGIKHGESPEQAMFRELHEEVG. The segment at 170 to 203 is disordered; the sequence is RAHRRDEGSEHNDHLDPTGPHDAGASVSEPKQAE. Basic and acidic residues predominate over residues 173–185; that stretch reads RRDEGSEHNDHLD.

This sequence belongs to the Nudix hydrolase family. RppH subfamily. The cofactor is a divalent metal cation.

In terms of biological role, accelerates the degradation of transcripts by removing pyrophosphate from the 5'-end of triphosphorylated RNA, leading to a more labile monophosphorylated state that can stimulate subsequent ribonuclease cleavage. In Leptothrix cholodnii (strain ATCC 51168 / LMG 8142 / SP-6) (Leptothrix discophora (strain SP-6)), this protein is RNA pyrophosphohydrolase.